The chain runs to 413 residues: MITGIKGFNDILPGEVERWQHIEATARRVFSLYGFSEIRIPILEKTELFRRSIGDTTDIVEKEMYSFVDKGENAVTMRPEGTASVMRSYIEHKLYAQDPVAKLYYMGPMFRYERPQKGRYRQFHQIGAEVTGVTDPKVDAQVLTMLCHYFAELGLTEPTLQINSLGCPECRPAYRQALIDFLRERLDSLCEDCKRRYQTNPLRALDCKSAHCKEATASAPAMLDSLCAGCDDHFTATRRHLERAGTTYSINNRMVRGLDYYTRTTFELVTGLLGAQSAVAAGGRYDGLISDLGGPAIPGIGFAMGVERIALLLGDQHFVGRPDLFIAALGEEAQDEAFRLMCGLQRNGVAVEMDYEGKSLKSQMRRSDKFNARFTLIIGGDELAIGAAVLKAMDTGVQVEVPLTPEEVAARIT.

Belongs to the class-II aminoacyl-tRNA synthetase family. As to quaternary structure, homodimer.

The protein localises to the cytoplasm. It catalyses the reaction tRNA(His) + L-histidine + ATP = L-histidyl-tRNA(His) + AMP + diphosphate + H(+). In Geobacter sulfurreducens (strain ATCC 51573 / DSM 12127 / PCA), this protein is Histidine--tRNA ligase.